The chain runs to 92 residues: MARIAPNEDSTMSTAYIIFNSSVAAVVDTEIANGANVTFSTVTVKEEINANRDFNLVNAQNGKISRAKRWGNEASKCEYFGREINPTEFFIK.

As to quaternary structure, interacts with host rRNA-guided surveillance complex (Csy complex) used to recognize the invading DNA; this interaction prevents DNA hybridization in the Csy complex. Binds to a the Csy spiral backbone.

Inhibited by phage protein Aca2 repressor (AC H9C180) both at the transcription and translatio levels. Anti-CRISPR protein that inactivates the type I-F CRISPR-Cas systems of the host by blocking its ability to recognize target DNA. Inhibits therefore the degradation of the viral DNA by the host. The sequence is that of Anti-CRISPR protein AcrF8 from Pectobacterium phage ZF40 (Bacteriophage ZF40).